The chain runs to 418 residues: Ankyrin repeat domain-containing protein 61 (418 aa).

ANK repeat units lie at residues 27-57 (ALHS…NQPL), 74-103 (QPIF…DPEV), 131-160 (TRIQ…QVNA), 166-195 (NKHS…QVNA), 199-228 (SSMT…NVNC), 233-272 (TGNT…QVNA), 276-305 (EGQT…NVNI), and 309-342 (NGES…PLRL).

The sequence is that of Ankyrin repeat domain-containing protein 61 (Ankrd61) from Rattus norvegicus (Rat).